Here is a 165-residue protein sequence, read N- to C-terminus: Glutamyl-tRNA(Gln) amidotransferase subunit F, mitochondrial (165 aa).

Positions 137-153 are enriched in basic and acidic residues; it reads VSDQRGERGFDTSELRT. Residues 137-165 are disordered; sequence VSDQRGERGFDTSELRTRINRAKSTAEKE.

This sequence belongs to the GatF family. In terms of assembly, subunit of the heterotrimeric GatFAB amidotransferase (AdT) complex, composed of A, B and F subunits.

The protein resides in the mitochondrion inner membrane. The enzyme catalyses L-glutamyl-tRNA(Gln) + L-glutamine + ATP + H2O = L-glutaminyl-tRNA(Gln) + L-glutamate + ADP + phosphate + H(+). Allows the formation of correctly charged Gln-tRNA(Gln) through the transamidation of misacylated Glu-tRNA(Gln) in the mitochondria. The reaction takes place in the presence of glutamine and ATP through an activated gamma-phospho-Glu-tRNA(Gln). Required for proper protein synthesis within the mitochondrion. This is Glutamyl-tRNA(Gln) amidotransferase subunit F, mitochondrial from Clavispora lusitaniae (strain ATCC 42720) (Yeast).